Consider the following 94-residue polypeptide: HssA/B-like protein 51 (94 aa).

The interval 1 to 25 (MTLFSSISSISNPMTNSKSRISSFG) is disordered.

This sequence belongs to the hssA/B family.

The chain is HssA/B-like protein 51 (hssl51) from Dictyostelium discoideum (Social amoeba).